Reading from the N-terminus, the 146-residue chain is uncharacterized protein (146 aa).

This is an uncharacterized protein from Acanthamoeba polyphaga mimivirus (APMV).